The following is a 394-amino-acid chain: MSKEKFERTKPHVNVGTIGHVDHGKTTLTAAITTVLAKHFGGAARAFDQIDNAPEEKARGITINTSHVEYDTETRHYAHVDCPGHADYVKNMITGAAQMDGAILVVAATDGPMPQTREHILLGRQVGVPYIIVFLNKCDMVDDEELLELVEMEVRELLSQYDFPGDDTPIVRGSALQALNGVPEWEEKIIELAQHLDSYIPEPERAIDKPFLLPIEDVFSISGRGTVVTGRVERGIIKSGEEVEIVGIKETTKTTVTGVEMFRKLLDEGRAGENVGALLRGTKREEIERGQVLAKPGTITPHTDFESEVYVLSKEEGGRHTPFFKGYRPQFYFRTTDVTGTIELPEGVEMVMPGDNIKMTVSLIHPIAMDEGLRFAIREGGRTVGAGVVAKIIK.

Residues 10–204 (KPHVNVGTIG…HLDSYIPEPE (195 aa)) enclose the tr-type G domain. The G1 stretch occupies residues 19–26 (GHVDHGKT). GTP is bound at residue 19 to 26 (GHVDHGKT). T26 contacts Mg(2+). The interval 60–64 (GITIN) is G2. A G3 region spans residues 81–84 (DCPG). GTP is bound by residues 81–85 (DCPGH) and 136–139 (NKCD). The tract at residues 136 to 139 (NKCD) is G4. A G5 region spans residues 174–176 (SAL).

Belongs to the TRAFAC class translation factor GTPase superfamily. Classic translation factor GTPase family. EF-Tu/EF-1A subfamily. As to quaternary structure, monomer.

The protein localises to the cytoplasm. It carries out the reaction GTP + H2O = GDP + phosphate + H(+). In terms of biological role, GTP hydrolase that promotes the GTP-dependent binding of aminoacyl-tRNA to the A-site of ribosomes during protein biosynthesis. This chain is Elongation factor Tu, found in Haemophilus ducreyi (strain 35000HP / ATCC 700724).